Consider the following 166-residue polypeptide: NADH-ubiquinone oxidoreductase chain 6 (166 aa).

6 helical membrane passes run phenylalanine 4–alanine 24, glutamine 27–glycine 47, phenylalanine 50–cysteine 70, valine 82–leucine 102, leucine 109–phenylalanine 129, and tryptophan 135–leucine 155.

Belongs to the complex I subunit 6 family.

It localises to the mitochondrion membrane. It catalyses the reaction a ubiquinone + NADH + 5 H(+)(in) = a ubiquinol + NAD(+) + 4 H(+)(out). In terms of biological role, core subunit of the mitochondrial membrane respiratory chain NADH dehydrogenase (Complex I) that is believed to belong to the minimal assembly required for catalysis. Complex I functions in the transfer of electrons from NADH to the respiratory chain. The immediate electron acceptor for the enzyme is believed to be ubiquinone. The polypeptide is NADH-ubiquinone oxidoreductase chain 6 (MT-ND6) (Lycodon semicarinatus (Ryukyu odd-tooth snake)).